We begin with the raw amino-acid sequence, 482 residues long: 7-deoxyloganetic acid glucosyl transferase (482 aa).

The active-site Proton acceptor is His-22. Residue His-22 participates in an anthocyanidin binding. The active-site Charge relay is the Asp-127. 8 residues coordinate UDP-alpha-D-glucose: Thr-149, Ala-362, Gln-364, His-379, Trp-382, Asn-383, Ser-384, and Glu-387. Position 402 (Ala-402) interacts with an anthocyanidin. Positions 403 and 404 each coordinate UDP-alpha-D-glucose.

This sequence belongs to the UDP-glycosyltransferase family. In terms of tissue distribution, expressed in the leaf internal phloem-associated parenchyma (IPAP) inside the mesophyll. Mostly observed in leaves, roots and stems, and, to a lower extent, in flowers.

Its subcellular location is the nucleus. It localises to the cytoplasm. The protein resides in the cytosol. The catalysed reaction is 7-deoxyloganetate + UDP-alpha-D-glucose = 7-deoxyloganate + UDP + H(+). Its pathway is alkaloid biosynthesis. Its function is as follows. Component of the seco-iridoid and derivatives monoterpenoid indole alkaloids (MIAs, e.g. vincristine, quinine, and strychnine) biosynthesis pathway. Catalyzes the glucosylation of 7-deoxyloganetic acid to form 7-deoxyloganic acid using UDP-glucose as the sugar donor. Inactive with loganetic acid, loganetin, iridodial, iridotrial, 8-OH-geraniol, jasmonic acid, gibberellic acid, indole acetic acid, salicylic acid, abscisic acid, zeatin and luteolin. This chain is 7-deoxyloganetic acid glucosyl transferase, found in Catharanthus roseus (Madagascar periwinkle).